Here is a 182-residue protein sequence, read N- to C-terminus: MKIKTLAIVVLSALSLSSAAALADTTTVNGGTVHFKGEVVNAACAVDAGSVDQTVQLGQVRTASLKQAGANSSAVVFNIQLNDCDTTVATKAAVAFLGTAIGPTHTDVLALQSSAAGSATNVGVQILDRTGAGLALDGATFSSETTLNNGTNTIPFQARYFATGAATPGAANADATFKVQYQ.

The N-terminal stretch at 1 to 23 is a signal peptide; the sequence is MKIKTLAIVVLSALSLSSAAALA. A disulfide bridge connects residues cysteine 44 and cysteine 84.

This sequence belongs to the fimbrial protein family.

The protein localises to the fimbrium. In Klebsiella pneumoniae, this protein is Fimbrial subunit type 1.